An 865-amino-acid chain; its full sequence is Leucine--tRNA ligase (865 aa).

Positions 44 to 54 match the 'HIGH' region motif; that stretch reads PYPSGRIHVGH. The 'KMSKS' region signature appears at 625-629; the sequence is KMSKS. Lys-628 contacts ATP.

It belongs to the class-I aminoacyl-tRNA synthetase family.

The protein resides in the cytoplasm. It carries out the reaction tRNA(Leu) + L-leucine + ATP = L-leucyl-tRNA(Leu) + AMP + diphosphate. This Maricaulis maris (strain MCS10) (Caulobacter maris) protein is Leucine--tRNA ligase.